The chain runs to 679 residues: Stress-70 protein, mitochondrial (679 aa).

Residues Met-1 to Tyr-46 constitute a mitochondrion transit peptide. An interaction with NFS1 region spans residues Met-1–Val-432. ADP contacts are provided by Thr-63 and Asn-64. The interval Thr-63–Asp-431 is nucleotide-binding domain (NBD). Lys-76 bears the N6-acetyllysine mark. Thr-87 is subject to Phosphothreonine. An N6-acetyllysine; alternate mark is found at Lys-135 and Lys-138. An N6-succinyllysine; alternate mark is found at Lys-135 and Lys-138. Lys-143 carries the post-translational modification N6-acetyllysine. Lys-206 carries the post-translational modification N6-acetyllysine; alternate. An N6-succinyllysine; alternate modification is found at Lys-206. The residue at position 206 (Lys-206) is an N6-malonyllysine; alternate. Residues Lys-234 and Lys-288 each carry the N6-acetyllysine modification. Lys-300 bears the N6-acetyllysine; alternate mark. Lys-300 is subject to N6-succinyllysine; alternate. Residues Glu-313, Lys-316, and Ser-320 each coordinate ADP. Lys-360 bears the N6-acetyllysine; alternate mark. The residue at position 360 (Lys-360) is an N6-succinyllysine; alternate. N6-succinyllysine is present on Lys-368. Positions 388 and 391 each coordinate ADP. Lys-394 is subject to N6-succinyllysine. Phosphoserine is present on Ser-408. Residues Val-432–Thr-441 form an interdomain linker region. Residues Val-432–Gln-679 form an interaction with FXN and ISCU region. The segment at Pro-442 to Gln-679 is substrate-binding domain (SBD). The residue at position 513 (Arg-513) is an Omega-N-methylarginine. 2 positions are modified to N6-acetyllysine; alternate: Lys-567 and Lys-600. N6-succinyllysine; alternate occurs at positions 567 and 600. Lys-610 carries the N6-succinyllysine modification. Lys-612 bears the N6-acetyllysine mark. An N6-acetyllysine; alternate modification is found at Lys-646. At Lys-646 the chain carries N6-succinyllysine; alternate. The disordered stretch occupies residues Met-655–Gln-679. Residues Glu-669–Gln-679 are compositionally biased toward basic and acidic residues.

This sequence belongs to the heat shock protein 70 family. Interacts strongly with the intermediate form of FXN and weakly with its mature form. Interacts with HSCB. Associates with the mitochondrial contact site and cristae organizing system (MICOS) complex, composed of at least MICOS10/MIC10, CHCHD3/MIC19, CHCHD6/MIC25, APOOL/MIC27, IMMT/MIC60, APOO/MIC23/MIC26 and QIL1/MIC13. This complex was also known under the names MINOS or MitOS complex. The MICOS complex associates with mitochondrial outer membrane proteins SAMM50, MTX1, MTX2 and DNAJC11, mitochondrial inner membrane protein TMEM11 and with HSPA9. Interacts with DNLZ, the interaction is required to prevent self-aggregation. Interacts with TESPA1. Interacts with PDPN. Interacts with NFU1, NFS1 and ISCU. Interacts with TP53; the interaction promotes TP53 degradation. Interacts (via SBD domain) with UBXN2A; the interaction with UBXN2A inhibits HSPA9 interaction with and degradation of TP53, thereby promotes TP53 translocation to the nucleus. Interacts with ITPR1 AND VDAC1; this interaction couples ITPR1 to VDAC1. Component of the TIM23 mitochondrial inner membrane pre-sequence translocase complex.

It is found in the mitochondrion. The protein localises to the nucleus. Its subcellular location is the nucleolus. It localises to the cytoplasm. The protein resides in the mitochondrion matrix. It catalyses the reaction ATP + H2O = ADP + phosphate + H(+). Its activity is regulated as follows. The chaperone activity is regulated by ATP-induced allosteric coupling of the nucleotide-binding (NBD) and substrate-binding (SBD) domains. ATP binding in the nucleotide-binding pocket (NBP) leads to a conformational change in the NBD, which is transferred through the interdomain linker (IDL) to the substrate-binding domain (SBD). This elicits a reduced substrate affinity and a faster substrate exchange rate. Upon hydrolysis of ATP to ADP, the protein undergoes a conformational change that increases its affinity for substrate proteins. It cycles through repeated phases of ATP hydrolysis and nucleotide exchange, facilitating repeated cycles of substrate binding and release. Functions in collaboration with co-chaperones. Functions with the co-chaperone, DNLZ, to maintain solubility and regulate ATP hydrolysis. Nucleotide exchange factors, GRPEL1 and GRPEL2, accelerate nucleotide exchange. In terms of biological role, mitochondrial chaperone that plays a key role in mitochondrial protein import, folding, and assembly. Plays an essential role in the protein quality control system, the correct folding of proteins, the re-folding of misfolded proteins, and the targeting of proteins for subsequent degradation. These processes are achieved through cycles of ATP binding, ATP hydrolysis, and ADP release, mediated by co-chaperones. In mitochondria, it associates with the TIM (translocase of the inner membrane) protein complex to assist in the import and folding of mitochondrial proteins. Plays an important role in mitochondrial iron-sulfur cluster (ISC) biogenesis, interacts with and stabilizes ISC cluster assembly proteins FXN, NFU1, NFS1 and ISCU. Regulates erythropoiesis via stabilization of ISC assembly. Regulates mitochondrial calcium-dependent apoptosis by coupling two calcium channels, ITPR1 and VDAC1, at the mitochondria-associated endoplasmic reticulum (ER) membrane to facilitate calcium transport from the ER lumen to the mitochondria intermembrane space, providing calcium for the downstream calcium channel MCU, which releases it into the mitochondrial matrix. Although primarily located in the mitochondria, it is also found in other cellular compartments. In the cytosol, it associates with proteins involved in signaling, apoptosis, or senescence. It may play a role in cell cycle regulation via its interaction with and promotion of degradation of TP53. May play a role in the control of cell proliferation and cellular aging. Protects against reactive oxygen species (ROS). Extracellular HSPA9 plays a cytoprotective role by preventing cell lysis following immune attack by the membrane attack complex by disrupting formation of the complex. The protein is Stress-70 protein, mitochondrial of Rattus norvegicus (Rat).